The sequence spans 191 residues: Putative glutathione-dependent formaldehyde-activating enzyme (191 aa).

The region spanning 20-166 is the CENP-V/GFA domain; sequence FAGGKLRCHC…FKALGLQTYD (147 aa). Zn(2+) contacts are provided by Cys-27, Cys-29, Cys-48, Cys-50, Cys-53, Cys-95, and Cys-98.

It belongs to the Gfa family. Zn(2+) serves as cofactor.

The catalysed reaction is S-(hydroxymethyl)glutathione = glutathione + formaldehyde. It participates in one-carbon metabolism; formaldehyde degradation; formate from formaldehyde (glutathione route): step 1/3. Catalyzes the condensation of formaldehyde and glutathione to S-hydroxymethylglutathione. The sequence is that of Putative glutathione-dependent formaldehyde-activating enzyme from Penicillium rubens (strain ATCC 28089 / DSM 1075 / NRRL 1951 / Wisconsin 54-1255) (Penicillium chrysogenum).